The primary structure comprises 601 residues: Elongation factor 4 (601 aa).

Residues 6–188 (EHIRNFSIIA…EIVRKIPAPE (183 aa)) form the tr-type G domain. Residues 18-23 (DHGKST) and 135-138 (NKID) each bind GTP.

It belongs to the TRAFAC class translation factor GTPase superfamily. Classic translation factor GTPase family. LepA subfamily.

Its subcellular location is the cell inner membrane. It catalyses the reaction GTP + H2O = GDP + phosphate + H(+). Its function is as follows. Required for accurate and efficient protein synthesis under certain stress conditions. May act as a fidelity factor of the translation reaction, by catalyzing a one-codon backward translocation of tRNAs on improperly translocated ribosomes. Back-translocation proceeds from a post-translocation (POST) complex to a pre-translocation (PRE) complex, thus giving elongation factor G a second chance to translocate the tRNAs correctly. Binds to ribosomes in a GTP-dependent manner. The protein is Elongation factor 4 of Hydrogenovibrio crunogenus (strain DSM 25203 / XCL-2) (Thiomicrospira crunogena).